The sequence spans 108 residues: Ig kappa chain V region BS-5 (108 aa).

The interval 1-23 is framework-1; the sequence is DVVMTQTPASVSEPVGGTVTIKC. Cystine bridges form between Cys-23/Cys-88 and Cys-80/Gly-108. The interval 24 to 34 is complementarity-determining-1; it reads QASQSIYSNLA. The framework-2 stretch occupies residues 35–49; the sequence is WYQZKPGQPPKLLIY. Residues 50–56 are complementarity-determining-2; sequence KASTLES. The segment at 57–88 is framework-3; it reads GVPSRFKGSGSGTDFTLTISDLECADAATYFC. Residues 89–97 are complementarity-determining-3; that stretch reads QGSBYTGTV. The tract at residues 98 to 107 is framework-4; that stretch reads FGGGTEVVVK.

This chain is Ig kappa chain V region BS-5, found in Oryctolagus cuniculus (Rabbit).